The following is a 295-amino-acid chain: Pyridoxal 5'-phosphate synthase subunit PdxS (295 aa).

Position 23 (aspartate 23) interacts with D-ribose 5-phosphate. The Schiff-base intermediate with D-ribose 5-phosphate role is filled by lysine 80. Residue glycine 152 coordinates D-ribose 5-phosphate. Arginine 164 contacts D-glyceraldehyde 3-phosphate. D-ribose 5-phosphate contacts are provided by residues glycine 213 and 234 to 235; that span reads GS.

Belongs to the PdxS/SNZ family. In the presence of PdxT, forms a dodecamer of heterodimers.

It carries out the reaction aldehydo-D-ribose 5-phosphate + D-glyceraldehyde 3-phosphate + L-glutamine = pyridoxal 5'-phosphate + L-glutamate + phosphate + 3 H2O + H(+). It functions in the pathway cofactor biosynthesis; pyridoxal 5'-phosphate biosynthesis. Catalyzes the formation of pyridoxal 5'-phosphate from ribose 5-phosphate (RBP), glyceraldehyde 3-phosphate (G3P) and ammonia. The ammonia is provided by the PdxT subunit. Can also use ribulose 5-phosphate and dihydroxyacetone phosphate as substrates, resulting from enzyme-catalyzed isomerization of RBP and G3P, respectively. The protein is Pyridoxal 5'-phosphate synthase subunit PdxS of Methanosphaera stadtmanae (strain ATCC 43021 / DSM 3091 / JCM 11832 / MCB-3).